The sequence spans 340 residues: Cytochrome c oxidase subunit 1 (340 aa).

A helical transmembrane segment spans residues 18–38 (MCYLLVAILCGFLGYIYSLFI). Ca(2+)-binding residues include E41 and G46. Residues 42 to 62 (LSIIGCGVLFGDYQYYNVLVT) form a helical membrane-spanning segment. A Fe(II)-heme a-binding site is contributed by H64. Transmembrane regions (helical) follow at residues 66–86 (LVMV…NYFV), 100–120 (LNNM…SGLL), 148–168 (FTVF…INLL), 186–206 (LFIW…PVLA), 237–257 (LFWF…FGLI), 279–299 (MILI…VVGM), and 305–325 (AYFG…LFNW). H243 lines the Cu cation pocket. Residues 243–247 (HPEVY) constitute a cross-link (1'-histidyl-3'-tyrosine (His-Tyr)). O2 is bound at residue Y247. Positions 292 and 293 each coordinate Cu cation.

This sequence belongs to the heme-copper respiratory oxidase family. In terms of assembly, component of the cytochrome c oxidase (complex IV, CIV), a multisubunit enzyme composed of a catalytic core of 3 subunits and several supernumerary subunits. The complex exists as a monomer or a dimer and forms supercomplexes (SCs) in the inner mitochondrial membrane with ubiquinol-cytochrome c oxidoreductase (cytochrome b-c1 complex, complex III, CIII). Heme is required as a cofactor. Cu cation serves as cofactor.

Its subcellular location is the mitochondrion inner membrane. It catalyses the reaction 4 Fe(II)-[cytochrome c] + O2 + 8 H(+)(in) = 4 Fe(III)-[cytochrome c] + 2 H2O + 4 H(+)(out). Its pathway is energy metabolism; oxidative phosphorylation. In terms of biological role, component of the cytochrome c oxidase, the last enzyme in the mitochondrial electron transport chain which drives oxidative phosphorylation. The respiratory chain contains 3 multisubunit complexes succinate dehydrogenase (complex II, CII), ubiquinol-cytochrome c oxidoreductase (cytochrome b-c1 complex, complex III, CIII) and cytochrome c oxidase (complex IV, CIV), that cooperate to transfer electrons derived from NADH and succinate to molecular oxygen, creating an electrochemical gradient over the inner membrane that drives transmembrane transport and the ATP synthase. Cytochrome c oxidase is the component of the respiratory chain that catalyzes the reduction of oxygen to water. Electrons originating from reduced cytochrome c in the intermembrane space (IMS) are transferred via the dinuclear copper A center (CU(A)) of subunit 2 and heme A of subunit 1 to the active site in subunit 1, a binuclear center (BNC) formed by heme A3 and copper B (CU(B)). The BNC reduces molecular oxygen to 2 water molecules using 4 electrons from cytochrome c in the IMS and 4 protons from the mitochondrial matrix. The sequence is that of Cytochrome c oxidase subunit 1 (COI) from Strigomonas oncopelti (Parasitic flagellate).